The primary structure comprises 423 residues: MLWRNEITEFMDQLSKYSQEILKTFKQLRPSEYKQYNEFLTQVTPLLQKTSEKIPELVDHIFNYLDNVEKICELLVNASSIIISSKIREQVKHGMSFSYKADLDSLADILSQKQYVLMHLSKNIAAEYFNTCLNQGKSKLDLKAASVFYSSRPRTASSAELYRKMLYAYGSPQEINYYTEKARNKTLDVEESDSMAIIERTARHNLSLMHPLEAMGLTFGATNTDADPEDLKDKTVINLTLPQATESITYHLKSLMQLKKVSTASGLNTNILKAFDNIISTPVKKNKMASKLAPGMDVVFTSDNGKTFFTKNILSKNMLAGPKERVFAYNNLISNLNNSCFIQNHNDFLRQQDSWPFYDAHNFTNKFLMQPIFSGQTRPRLQGAMEAAHVETHLTAFLQSIQPSRPQDPSVLASPKLSALILN.

Belongs to the asfivirus E423R family.

The protein resides in the virion. This is an uncharacterized protein from Ornithodoros (relapsing fever ticks).